The primary structure comprises 64 residues: MAKIRQKTKRAAAKRFSITKNGKLKRKHAYRSHLALGRSTKAKRHLRKDAIMSTSDTKRYTQCL.

It belongs to the bacterial ribosomal protein bL35 family.

The polypeptide is Large ribosomal subunit protein bL35 (Ureaplasma urealyticum serovar 10 (strain ATCC 33699 / Western)).